The sequence spans 76 residues: uncharacterized protein (76 aa).

The protein localises to the plastid. This is an uncharacterized protein from Euglena longa (Euglenophycean alga).